The chain runs to 353 residues: tRNA-specific 2-thiouridylase MnmA 2 (353 aa).

Residues 9-16 (AMSGGVDS) and Met35 contribute to the ATP site. Cys98 (nucleophile) is an active-site residue. The cysteines at positions 98 and 194 are disulfide-linked. Residue Gly122 coordinates ATP. The tract at residues 144–146 (KDQ) is interaction with tRNA. The active-site Cysteine persulfide intermediate is Cys194. The interval 300 to 301 (RY) is interaction with tRNA.

It belongs to the MnmA/TRMU family.

It is found in the cytoplasm. It catalyses the reaction S-sulfanyl-L-cysteinyl-[protein] + uridine(34) in tRNA + AH2 + ATP = 2-thiouridine(34) in tRNA + L-cysteinyl-[protein] + A + AMP + diphosphate + H(+). Catalyzes the 2-thiolation of uridine at the wobble position (U34) of tRNA, leading to the formation of s(2)U34. The polypeptide is tRNA-specific 2-thiouridylase MnmA 2 (Clostridium botulinum (strain Loch Maree / Type A3)).